The following is a 590-amino-acid chain: Negative elongation factor D (590 aa).

The interval 15–43 (YGSAAEWGDEADGGQQEDDSGEGEDDAEV) is disordered. The segment covering 21-43 (WGDEADGGQQEDDSGEGEDDAEV) has biased composition (acidic residues).

It belongs to the NELF-D family. The NELF complex is composed of NELFA, NELFB, NELFCD and NELFE; NELFA and NELFCD form a stable subcomplex that binds primarily through NELFCD to the N-terminus of NELFB. Binds RNA which may help to stabilize the NELF complex on nucleic acid. In vitro, the NELFA:NELFCD subcomplex binds to ssDNA and ssRNA in a sequence- and structure-dependent manner. Interacts with ARAF1. Interacts with PCF11. Interacts with NELFB. Interacts with KAT8.

It localises to the nucleus. Functionally, essential component of the NELF complex, a complex that negatively regulates the elongation of transcription by RNA polymerase II. The NELF complex, which acts via an association with the DSIF complex and causes transcriptional pausing, is counteracted by the P-TEFb kinase complex. This Pongo abelii (Sumatran orangutan) protein is Negative elongation factor D (NELFCD).